A 296-amino-acid chain; its full sequence is Ribosomal protein L11 methyltransferase (296 aa).

Positions 145, 166, 188, and 230 each coordinate S-adenosyl-L-methionine.

Belongs to the methyltransferase superfamily. PrmA family.

It is found in the cytoplasm. The catalysed reaction is L-lysyl-[protein] + 3 S-adenosyl-L-methionine = N(6),N(6),N(6)-trimethyl-L-lysyl-[protein] + 3 S-adenosyl-L-homocysteine + 3 H(+). Methylates ribosomal protein L11. In Histophilus somni (strain 2336) (Haemophilus somnus), this protein is Ribosomal protein L11 methyltransferase.